Here is a 423-residue protein sequence, read N- to C-terminus: MTQEVIKIRGGQTLKGDVTISGAKNSAVAIIPATLLAQGQVKLDGLPQISDVETLVSLLEDLNIKAHLNGKTLEVDTSEIENAPLPNNKVESLRASYYMMGAMLGRFKKCVIGLPGGCPLGPRPIDQHIKGFKALGAEIDESNDTSMKIEAKELHGANIFLDMVSVGATINIMLAAVHATGQTVIENAAKEPEVVDVANFLNSLGADIKGAGTSTLKINGVDSLHGSEYQIIPDRIEAGTYMCIAAAVGEEITINNIVPKHVEALTVKLKELGVDIQVDGDAEKAIIKRKSSYKNVDIKTLVYPGFATDLQQPITPLLFMADGPSFVTETIYPARFRHVDELKNMGANIEADMETGTATIKPSSLNGAEVYASDLRAGACLIIAGLLAEGVTTIYNVRHIYRGYTDIVKHLKELGANIWTEEV.

24–25 (KN) serves as a coordination point for phosphoenolpyruvate. A UDP-N-acetyl-alpha-D-glucosamine-binding site is contributed by R94. C118 (proton donor) is an active-site residue. C118 is subject to 2-(S-cysteinyl)pyruvic acid O-phosphothioketal. Residues 123–127 (RPIDQ), D309, and I331 each bind UDP-N-acetyl-alpha-D-glucosamine.

The protein belongs to the EPSP synthase family. MurA subfamily.

The protein resides in the cytoplasm. It catalyses the reaction phosphoenolpyruvate + UDP-N-acetyl-alpha-D-glucosamine = UDP-N-acetyl-3-O-(1-carboxyvinyl)-alpha-D-glucosamine + phosphate. The protein operates within cell wall biogenesis; peptidoglycan biosynthesis. Cell wall formation. Adds enolpyruvyl to UDP-N-acetylglucosamine. The protein is UDP-N-acetylglucosamine 1-carboxyvinyltransferase 1 of Staphylococcus haemolyticus (strain JCSC1435).